A 310-amino-acid chain; its full sequence is Melanocyte-stimulating hormone receptor (310 aa).

The Extracellular segment spans residues 1–37 (MPMQGAQRKLLGSLNSTPTATSNLGLAANRTGAPCLE). N29 carries an N-linked (GlcNAc...) asparagine glycan. A helical transmembrane segment spans residues 38-63 (LPIPDGLFLSLGLVSLVENVLVVAAI). Residues 64 to 72 (AKNRNLHSS) lie on the Cytoplasmic side of the membrane. A helical transmembrane segment spans residues 73–93 (MYCFICCLALSDLLVSGSNML). Residues 94-110 (EAGVLATRASVVQQLHN) lie on the Extracellular side of the membrane. Residues 111–132 (TIDVLTCSSMLCSLCFLGAIAV) traverse the membrane as a helical segment. The Cytoplasmic segment spans residues 133 to 155 (DRYISIFYALRYHSIMTLPRAQR). Residues 156 to 175 (AVAAIWVASVLSSTLFITYY) form a helical membrane-spanning segment. Residues 176 to 183 (DHAAVLLC) lie on the Extracellular side of the membrane. Residues 184 to 203 (LVVFFLAMLVLMAVLYVHML) traverse the membrane as a helical segment. Topologically, residues 204–232 (AWACQHAQGIIRLHKRQPPAHKGFGLRGA) are cytoplasmic. Residues 233–258 (ATLTILLGIFFLCWGPFFLRLTLVVF) traverse the membrane as a helical segment. Over 259–271 (CPQHLTCNCIFKN) the chain is Extracellular. The helical transmembrane segment at 272-292 (FKVFLTLIICNTIIDPLIYAF) threads the bilayer. The Cytoplasmic portion of the chain corresponds to 293–310 (RSQELRRTLKEVLGRGRW).

Belongs to the G-protein coupled receptor 1 family. Interacts with MGRN1, but does not undergo MGRN1-mediated ubiquitination; this interaction competes with GNAS-binding and thus inhibits agonist-induced cAMP production. Interacts with OPN3; the interaction results in a decrease in MC1R-mediated cAMP signaling and ultimately a decrease in melanin production in melanocytes.

It is found in the cell membrane. Receptor for MSH (alpha, beta and gamma) and ACTH. The activity of this receptor is mediated by G proteins which activate adenylate cyclase. Mediates melanogenesis, the production of eumelanin (black/brown) and phaeomelanin (red/yellow), via regulation of cAMP signaling in melanocytes. The protein is Melanocyte-stimulating hormone receptor (MC1R) of Leontopithecus chrysomelas (Golden-headed lion tamarin).